The chain runs to 565 residues: MKMRPRYSVIASAVSLGFVLSKSVMALDRPDTGSLNRELEQRQIQSEAKPSGELFNQTANSPYTAQYKQGLKFPLKQVQILDRNNQEVVTDELAHILKNYVGKEVSLSDLSNLANEISEFYRHNNYLVAKAILPPQEIEQGTVKILLLKGNVGEIRLQNHSALSNKFVSRLSNTTVNASEFILKDELEKFALTINDVPGVNAGLQLSAGKKVGEANLLIKINDAKRFSSYVSVDNQGNKYTGRYRLAAGTKVSNLNGWGDELKLDLMSSNQANLKNARIDYSSLIDGYSTRFGVTANYLDYKLGGNFKSLQSQGHSHTLGAYLLHPTIRTPNFRLSTKVSFNHQNLTDKQQAVYVKQKRKINSLTAGIDGSWNLIKDGTTYFSLSTLFGNLANQTSEKKQYTKEDFQPQSHFTVYNYRLSHEQILPKSFAFNIGINGQFADKTLESSQKMLLGGLSGVRGHQAGAASVDEGHLIQTEFKHYLPVFSQSVLVSSLFYDYGLGKYYKNSQFLEKGVKNSVKLQSVGAGLSLSDAGSYAINVSVAKPLDNNINNADKHQFWLSMIKTF.

The first 26 residues, 1-26 (MKMRPRYSVIASAVSLGFVLSKSVMA), serve as a signal peptide directing secretion. Positions 73-150 (FPLKQVQILD…GTVKILLLKG (78 aa)) constitute a POTRA domain.

The protein belongs to the TPS (TC 1.B.20) family.

It localises to the cell outer membrane. Its function is as follows. Likely functions in the release of soluble HxuA from the cell. Probable member of a two partner secretion pathway (TPS) in which it mediates the secretion of HuxA. This Haemophilus influenzae (strain ATCC 51907 / DSM 11121 / KW20 / Rd) protein is Heme/hemopexin transporter protein HuxB (hxuB).